The sequence spans 327 residues: rRNA 2'-O-methyltransferase fibrillarin (327 aa).

Positions 1–93 are disordered; that stretch reads MKPGFSPRGG…RGNQSGKNVM (93 aa). Residues 7 to 80 are compositionally biased toward gly residues; that stretch reads PRGGGFGGRG…GGGRGRGGGR (74 aa). Asymmetric dimethylarginine occurs at positions 8, 15, 21, 24, 28, and 31. Residues Lys-90, Lys-108, and Lys-115 each participate in a glycyl lysine isopeptide (Lys-Gly) (interchain with G-Cter in SUMO2) cross-link. Lys-108 is modified (N6-acetyllysine). Ser-122 carries the phosphoserine modification. Lys-127 bears the N6-acetyllysine mark. Residues Ser-130 and Ser-132 each carry the phosphoserine modification. Glycyl lysine isopeptide (Lys-Gly) (interchain with G-Cter in SUMO2) cross-links involve residues Lys-137, Lys-149, and Lys-164. Residues 178–179 and 197–198 contribute to the S-adenosyl-L-methionine site; these read TT and EF. N6-acetyllysine is present on residues Lys-211 and Lys-212. S-adenosyl-L-methionine-binding positions include 222–223 and 242–245; these read DA and DVAQ.

It belongs to the methyltransferase superfamily. Fibrillarin family. In terms of assembly, component of box C/D small nucleolar ribonucleoprotein (snoRNP) particles that contain SNU13, FBL, NOP5 and NOP56, plus a guide RNA. It is associated with the U3, U8, U13, X and Y small nuclear RNAs. Component of several ribosomal and nucleolar protein complexes. Part of the small subunit (SSU) processome, composed of more than 70 proteins and the RNA chaperone small nucleolar RNA (snoRNA) U3. Interacts with PRMT5 and UTP20. Interacts with DDX5 and C1QBP. Interacts with NOL11. Interacts with PIH1D1. Interacts with RRP1B. Interacts with NOLC1. Interacts with SDE2. Interacts with NOP2 and NOP56. In terms of processing, ubiquitinated. Ubiquitination leads to proteasomal degradation. Deubiquitinated by USP36. By homology to other fibrillarins, some or all of the N-terminal domain arginines are modified to asymmetric dimethylarginine (DMA). Post-translationally, acetylated by CREBBP/CBP, preventing methylation of 'Gln-105' of histone H2A (H2AQ104me), without affecting rRNA methylation. Deacetylation by SIRT7 restores methylation of 'Gln-105' of histone H2A (H2AQ104me).

It is found in the nucleus. The protein localises to the nucleolus. Its subcellular location is the nucleoplasm. The enzyme catalyses L-glutaminyl-[histone H2A] + S-adenosyl-L-methionine = N(5)-methyl-L-glutaminyl-[histone H2A] + S-adenosyl-L-homocysteine + H(+). It catalyses the reaction a ribonucleotide in rRNA + S-adenosyl-L-methionine = a 2'-O-methylribonucleotide in rRNA + S-adenosyl-L-homocysteine + H(+). It carries out the reaction a ribonucleotide in U6 snRNA + S-adenosyl-L-methionine = a 2'-O-methylribonucleotide in U6 snRNA + S-adenosyl-L-homocysteine + H(+). Functionally, S-adenosyl-L-methionine-dependent methyltransferase that has the ability to methylate both RNAs and proteins. Involved in pre-rRNA processing by catalyzing the site-specific 2'-hydroxyl methylation of ribose moieties in pre-ribosomal RNA. Site specificity is provided by a guide RNA that base pairs with the substrate. Methylation occurs at a characteristic distance from the sequence involved in base pairing with the guide RNA. Probably catalyzes 2'-O-methylation of U6 snRNAs in box C/D RNP complexes. U6 snRNA 2'-O-methylation is required for mRNA splicing fidelity. Also acts as a protein methyltransferase by mediating methylation of 'Gln-105' of histone H2A (H2AQ104me), a modification that impairs binding of the FACT complex and is specifically present at 35S ribosomal DNA locus. Part of the small subunit (SSU) processome, first precursor of the small eukaryotic ribosomal subunit. During the assembly of the SSU processome in the nucleolus, many ribosome biogenesis factors, an RNA chaperone and ribosomal proteins associate with the nascent pre-rRNA and work in concert to generate RNA folding, modifications, rearrangements and cleavage as well as targeted degradation of pre-ribosomal RNA by the RNA exosome. The sequence is that of rRNA 2'-O-methyltransferase fibrillarin (Fbl) from Rattus norvegicus (Rat).